A 298-amino-acid chain; its full sequence is Acetylglutamate kinase (298 aa).

Substrate-binding positions include 61 to 62, Arg-83, and Asn-188; that span reads GG.

It belongs to the acetylglutamate kinase family. ArgB subfamily.

The protein resides in the cytoplasm. It catalyses the reaction N-acetyl-L-glutamate + ATP = N-acetyl-L-glutamyl 5-phosphate + ADP. The protein operates within amino-acid biosynthesis; L-arginine biosynthesis; N(2)-acetyl-L-ornithine from L-glutamate: step 2/4. In terms of biological role, catalyzes the ATP-dependent phosphorylation of N-acetyl-L-glutamate. This is Acetylglutamate kinase from Syntrophobacter fumaroxidans (strain DSM 10017 / MPOB).